The sequence spans 122 residues: Large ribosomal subunit protein bL12 (122 aa).

The protein belongs to the bacterial ribosomal protein bL12 family. As to quaternary structure, homodimer. Part of the ribosomal stalk of the 50S ribosomal subunit. Forms a multimeric L10(L12)X complex, where L10 forms an elongated spine to which 2 to 4 L12 dimers bind in a sequential fashion. Binds GTP-bound translation factors.

Its function is as follows. Forms part of the ribosomal stalk which helps the ribosome interact with GTP-bound translation factors. Is thus essential for accurate translation. The polypeptide is Large ribosomal subunit protein bL12 (Pasteurella multocida (strain Pm70)).